Reading from the N-terminus, the 92-residue chain is Small ribosomal subunit protein uS19c (92 aa).

This sequence belongs to the universal ribosomal protein uS19 family.

Its subcellular location is the plastid. It is found in the chloroplast. Functionally, protein S19 forms a complex with S13 that binds strongly to the 16S ribosomal RNA. The protein is Small ribosomal subunit protein uS19c of Morus indica (Mulberry).